The following is a 343-amino-acid chain: ATPase GET3 (343 aa).

32-39 (KGGVGKTT) provides a ligand contact to ATP. Asp61 is an active-site residue. ATP is bound by residues Glu245 and Asn272. Zn(2+) is bound by residues Cys283 and Cys286.

Belongs to the arsA ATPase family. As to quaternary structure, homodimer.

Its subcellular location is the cytoplasm. It is found in the endoplasmic reticulum. In terms of biological role, ATPase required for the post-translational delivery of tail-anchored (TA) proteins to the endoplasmic reticulum. Recognizes and selectively binds the transmembrane domain of TA proteins in the cytosol. This complex then targets to the endoplasmic reticulum by membrane-bound receptors, where the tail-anchored protein is released for insertion. This process is regulated by ATP binding and hydrolysis. ATP binding drives the homodimer towards the closed dimer state, facilitating recognition of newly synthesized TA membrane proteins. ATP hydrolysis is required for insertion. Subsequently, the homodimer reverts towards the open dimer state, lowering its affinity for the membrane-bound receptor, and returning it to the cytosol to initiate a new round of targeting. This Pyricularia oryzae (strain 70-15 / ATCC MYA-4617 / FGSC 8958) (Rice blast fungus) protein is ATPase GET3.